We begin with the raw amino-acid sequence, 366 residues long: Aminomethyltransferase (366 aa).

Belongs to the GcvT family. In terms of assembly, the glycine cleavage system is composed of four proteins: P, T, L and H.

The catalysed reaction is N(6)-[(R)-S(8)-aminomethyldihydrolipoyl]-L-lysyl-[protein] + (6S)-5,6,7,8-tetrahydrofolate = N(6)-[(R)-dihydrolipoyl]-L-lysyl-[protein] + (6R)-5,10-methylene-5,6,7,8-tetrahydrofolate + NH4(+). In terms of biological role, the glycine cleavage system catalyzes the degradation of glycine. This is Aminomethyltransferase from Bacillus cytotoxicus (strain DSM 22905 / CIP 110041 / 391-98 / NVH 391-98).